Here is a 484-residue protein sequence, read N- to C-terminus: Glutamate--tRNA ligase (484 aa).

The 'HIGH' region signature appears at 9–19 (PSPTGNLHIGT). The Zn(2+) site is built by cysteine 98, cysteine 100, histidine 125, and histidine 127. Residues 250-254 (KLSKR) carry the 'KMSKS' region motif. Residue lysine 253 participates in ATP binding.

It belongs to the class-I aminoacyl-tRNA synthetase family. Glutamate--tRNA ligase type 1 subfamily. As to quaternary structure, monomer. Zn(2+) serves as cofactor.

The protein resides in the cytoplasm. It carries out the reaction tRNA(Glu) + L-glutamate + ATP = L-glutamyl-tRNA(Glu) + AMP + diphosphate. Functionally, catalyzes the attachment of glutamate to tRNA(Glu) in a two-step reaction: glutamate is first activated by ATP to form Glu-AMP and then transferred to the acceptor end of tRNA(Glu). The sequence is that of Glutamate--tRNA ligase from Crocosphaera subtropica (strain ATCC 51142 / BH68) (Cyanothece sp. (strain ATCC 51142)).